Here is a 106-residue protein sequence, read N- to C-terminus: Large ribosomal subunit protein uL24 (106 aa).

Belongs to the universal ribosomal protein uL24 family. Part of the 50S ribosomal subunit.

One of two assembly initiator proteins, it binds directly to the 5'-end of the 23S rRNA, where it nucleates assembly of the 50S subunit. Its function is as follows. One of the proteins that surrounds the polypeptide exit tunnel on the outside of the subunit. This chain is Large ribosomal subunit protein uL24, found in Gluconobacter oxydans (strain 621H) (Gluconobacter suboxydans).